A 146-amino-acid chain; its full sequence is Endoribonuclease YbeY (146 aa).

Zn(2+) is bound by residues His-108, His-112, and His-118.

This sequence belongs to the endoribonuclease YbeY family. Zn(2+) serves as cofactor.

It localises to the cytoplasm. Functionally, single strand-specific metallo-endoribonuclease involved in late-stage 70S ribosome quality control and in maturation of the 3' terminus of the 16S rRNA. This Aster yellows witches'-broom phytoplasma (strain AYWB) protein is Endoribonuclease YbeY.